The following is a 172-amino-acid chain: Translationally-controlled tumor protein homolog (172 aa).

The TCTP domain occupies 1–172 (MIIYKDCITE…FKDGLIIEKC (172 aa)).

This sequence belongs to the TCTP family.

The protein localises to the cytoplasm. In terms of biological role, involved in calcium binding and microtubule stabilization. This is Translationally-controlled tumor protein homolog (tpt1) from Xenopus laevis (African clawed frog).